Reading from the N-terminus, the 337-residue chain is Glyceraldehyde-3-phosphate dehydrogenase 1, cytosolic (337 aa).

Residues 13–14 (RI), Asp35, and Arg82 each bind NAD(+). D-glyceraldehyde 3-phosphate-binding positions include 153 to 155 (SCT), Thr184, 213 to 214 (TG), and Arg236. The active-site Nucleophile is Cys154. Asn318 is an NAD(+) binding site.

The protein belongs to the glyceraldehyde-3-phosphate dehydrogenase family. In terms of assembly, homotetramer.

The protein resides in the cytoplasm. The enzyme catalyses D-glyceraldehyde 3-phosphate + phosphate + NAD(+) = (2R)-3-phospho-glyceroyl phosphate + NADH + H(+). It functions in the pathway carbohydrate degradation; glycolysis; pyruvate from D-glyceraldehyde 3-phosphate: step 1/5. Functionally, key enzyme in glycolysis that catalyzes the first step of the pathway by converting D-glyceraldehyde 3-phosphate (G3P) into 3-phospho-D-glyceroyl phosphate. Essential for the maintenance of cellular ATP levels and carbohydrate metabolism. This Hordeum vulgare (Barley) protein is Glyceraldehyde-3-phosphate dehydrogenase 1, cytosolic (GAPC).